Reading from the N-terminus, the 116-residue chain is Large ribosomal subunit protein bL17 (116 aa).

This sequence belongs to the bacterial ribosomal protein bL17 family. As to quaternary structure, part of the 50S ribosomal subunit. Contacts protein L32.

The chain is Large ribosomal subunit protein bL17 from Helicobacter pylori (strain J99 / ATCC 700824) (Campylobacter pylori J99).